A 298-amino-acid chain; its full sequence is MSNAREIRSKVQSVKNTQKITGAMELVAASKMRGAIVKMNNVRPYVESANTIIKNVTAASIDYPNPYLFDRDVKRVGYIVTSTDRGLCGGLNINLFKHVLKEIKNNIEDRVGFDVCVIGSKAENFFAKLKDVNIVATAHYNDKDKEGSIRAIGGAVKVMLDKFTAGEIDRLYMSSNQFVSTIKQRPRLQTLLPIQDIFSAEEIKANKEKATKGHWDYIYERDIEEVLNALCIRYIEAQVRGAILENAACEQAARMMAMKNATDNASDIIDQLKLDYNKVRQAMITQELAEICSGAAAV.

The protein belongs to the ATPase gamma chain family. As to quaternary structure, F-type ATPases have 2 components, CF(1) - the catalytic core - and CF(0) - the membrane proton channel. CF(1) has five subunits: alpha(3), beta(3), gamma(1), delta(1), epsilon(1). CF(0) has three main subunits: a, b and c.

The protein localises to the cell inner membrane. Its function is as follows. Produces ATP from ADP in the presence of a proton gradient across the membrane. The gamma chain is believed to be important in regulating ATPase activity and the flow of protons through the CF(0) complex. This chain is ATP synthase gamma chain, found in Francisella tularensis subsp. holarctica (strain LVS).